The chain runs to 251 residues: Histocompatibility antigen 60b (251 aa).

The signal sequence occupies residues 1–24 (MAKSSLSLNWSLLVLLNFLGATLS). The Extracellular portion of the chain corresponds to 25–212 (TGTDSLSCEL…NSDTQGLSFT (188 aa)). 4 N-linked (GlcNAc...) asparagine glycosylation sites follow: Asn-63, Asn-93, Asn-126, and Asn-189. The helical transmembrane segment at 213–233 (WIVIICIGGIVSFMAFMVFAW) threads the bilayer. The Cytoplasmic segment spans residues 234–251 (CMLKKKKGALCCSSSSTT).

The protein belongs to the NKG2D ligand family. In terms of tissue distribution, in strain C57BL/6J, strongly expressed in cardiac muscle and skeletal muscle, with lower expression levels in spleen, liver, kidney and thymus. In strain BALB/cJ, weakly expressed in cardiac muscle, spleen, kidney and thymus.

The protein resides in the cell membrane. Its function is as follows. Ligand for the KLRK1 immunosurveillance receptor. Binding to KLRK1 stimulates cell lysis in vitro. This is Histocompatibility antigen 60b from Mus musculus (Mouse).